The following is an 873-amino-acid chain: Bifunctional uridylyltransferase/uridylyl-removing enzyme (873 aa).

Residues 1-332 (MPYQCPITFN…NGGQTQEAEI (332 aa)) are uridylyltransferase. The tract at residues 333–692 (LDNDFQRRGS…ISKKATRGGT (360 aa)) is uridylyl-removing. Residues 451-573 (VDEHSIRLLK…VRDEESLELL (123 aa)) form the HD domain. ACT domains follow at residues 693 to 777 (EVFV…RTPR) and 800 to 873 (LMEL…ELAP).

The protein belongs to the GlnD family. The cofactor is Mg(2+).

It carries out the reaction [protein-PII]-L-tyrosine + UTP = [protein-PII]-uridylyl-L-tyrosine + diphosphate. It catalyses the reaction [protein-PII]-uridylyl-L-tyrosine + H2O = [protein-PII]-L-tyrosine + UMP + H(+). Uridylyltransferase (UTase) activity is inhibited by glutamine, while glutamine activates uridylyl-removing (UR) activity. Modifies, by uridylylation and deuridylylation, the PII regulatory proteins (GlnB and homologs), in response to the nitrogen status of the cell that GlnD senses through the glutamine level. Under low glutamine levels, catalyzes the conversion of the PII proteins and UTP to PII-UMP and PPi, while under higher glutamine levels, GlnD hydrolyzes PII-UMP to PII and UMP (deuridylylation). Thus, controls uridylylation state and activity of the PII proteins, and plays an important role in the regulation of nitrogen assimilation and metabolism. The chain is Bifunctional uridylyltransferase/uridylyl-removing enzyme from Vibrio atlanticus (strain LGP32) (Vibrio splendidus (strain Mel32)).